A 267-amino-acid polypeptide reads, in one-letter code: MSIPTPYEDLLRDVMANGTHKSDRTGTGTRSVFGRQLRFDLAESFPLITTKRVHFKSVAVELLWFLRGDSNVKWMQDQGVSIWDEWADADGELGPVYGVQWRSWPTPDGGHIDQISELMTNLAANPDSRRHIVSAWNVSELKDMALPPCHAFFQFYVADGKLSCQLYQRSADTFLGVPFNIASYALLTRMVAQQLGLEPGEFVWTGGDVHVYDNHVDQVAEQLSREPYEYPQLKILRKPDSIFDYTLDDFEVVDYRHHPTIKAPIAV.

R24 lines the dUMP pocket. A (6R)-5,10-methylene-5,6,7,8-tetrahydrofolate-binding site is contributed by H54. A dUMP-binding site is contributed by 129–130 (RR). Residue C149 is the Nucleophile of the active site. DUMP is bound by residues 169–172 (RSAD), N180, and 210–212 (HVY). D172 contacts (6R)-5,10-methylene-5,6,7,8-tetrahydrofolate. A266 contributes to the (6R)-5,10-methylene-5,6,7,8-tetrahydrofolate binding site.

It belongs to the thymidylate synthase family. Bacterial-type ThyA subfamily. Homodimer.

The protein localises to the cytoplasm. The enzyme catalyses dUMP + (6R)-5,10-methylene-5,6,7,8-tetrahydrofolate = 7,8-dihydrofolate + dTMP. It participates in pyrimidine metabolism; dTTP biosynthesis. Functionally, catalyzes the reductive methylation of 2'-deoxyuridine-5'-monophosphate (dUMP) to 2'-deoxythymidine-5'-monophosphate (dTMP) while utilizing 5,10-methylenetetrahydrofolate (mTHF) as the methyl donor and reductant in the reaction, yielding dihydrofolate (DHF) as a by-product. This enzymatic reaction provides an intracellular de novo source of dTMP, an essential precursor for DNA biosynthesis. The polypeptide is Thymidylate synthase (Paenarthrobacter aurescens (strain TC1)).